The following is a 601-amino-acid chain: Coronin-like protein crn1 (601 aa).

5 WD repeats span residues 79–119, 132–172, 174–213, 220–260, and 266–306; these read GHTA…TVME, GHSR…AHVS, KMDV…PVSV, AKNP…EPIG, and DTGS…FHYL. Disordered regions lie at residues 361 to 386 and 407 to 540; these read SDIY…KDAQ and SATV…VEEK. Basic and acidic residues-rich tracts occupy residues 419–429, 437–453, and 462–495; these read KHNEEKVETPK, KPKE…EPEV, and KVEE…EKSF. Phosphoserine is present on residues Ser500 and Ser501. A compositionally biased stretch (basic and acidic residues) spans 507–526; the sequence is EDVKKEPSEEKKLEVSDEAP. Ser553 carries the post-translational modification Phosphoserine. A coiled-coil region spans residues 556–600; the sequence is NLADLNKRFEGFEKRYEEELAIRDWKIAQLEDKLAKLTEAIKEKC.

Belongs to the WD repeat coronin family. As to quaternary structure, binds to F-actin.

The chain is Coronin-like protein crn1 (crn1) from Schizosaccharomyces pombe (strain 972 / ATCC 24843) (Fission yeast).